The primary structure comprises 328 residues: Putative tyrosine-protein kinase C03B1.5 (328 aa).

The Protein kinase domain maps to 25-288 (WSPALKIGSG…ALHASSQTYL (264 aa)). Residues 31–39 (IGSGAFGEV) and Lys62 each bind ATP. Asp155 serves as the catalytic Proton acceptor.

The protein belongs to the protein kinase superfamily. Tyr protein kinase family.

It catalyses the reaction L-tyrosyl-[protein] + ATP = O-phospho-L-tyrosyl-[protein] + ADP + H(+). This Caenorhabditis elegans protein is Putative tyrosine-protein kinase C03B1.5.